We begin with the raw amino-acid sequence, 314 residues long: Formate-nitrite transporter (314 aa).

Over 1 to 47 (MQKSTSKYVIDPISIKTNCSSEESYIRCVEYGKGKAHYRNLILLAKA) the chain is Cytoplasmic. The chain crosses the membrane as a helical span at residues 48–68 (ILAGVFVGVCAHASGIAGGLF). Over 69 to 77 (YYHKLREYV) the chain is Extracellular. The chain crosses the membrane as a helical span at residues 78-98 (GISMSAFVYGFTFPIAFLCII). At 99–128 (CTGSDLFTGNTLAVTTALLQKKLGLLCYMR) the chain is on the cytoplasmic side. The chain crosses the membrane as a helical span at residues 129–149 (VMCISLVGNYIGAVAFAFFVS). The Extracellular segment spans residues 150–185 (YGSGAFSINTDTSKNHIFQFLNDIAIKKVSHSFIEC). The chain crosses the membrane as a helical span at residues 186–206 (ICLAIGCNIFVCLAVYFVLSI). Topologically, residues 207-211 (KDGSG) are cytoplasmic. A helical membrane pass occupies residues 212-232 (LVFSVFFAVYAFAIAGYEHII). The Extracellular portion of the chain corresponds to 233-260 (ANIYTLNLALMISNDISFTQVYFKNLLP). Residues 261-281 (TLIGNYIAGGLVLAFPLFFIY) traverse the membrane as a helical segment. The Cytoplasmic portion of the chain corresponds to 282–314 (RSCYYDYDKMNDELNTVVLKTLSLELQNESNHI).

Belongs to the FNT transporter (TC 1.A.16) family. Homopentamer.

The protein localises to the cell membrane. It is found in the vacuole membrane. The enzyme catalyses (S)-lactate(in) + H(+)(in) = (S)-lactate(out) + H(+)(out). It catalyses the reaction formate(in) + H(+)(in) = formate(out) + H(+)(out). It carries out the reaction pyruvate(out) + H(+)(out) = pyruvate(in) + H(+)(in). The catalysed reaction is acetate(out) + H(+)(out) = acetate(in) + H(+)(in). With respect to regulation, inhibited by the Malaria Box compound MMV007839 and its derivatives BH296 and BH267.meta. Monocarboxylate-proton symporter that mediates the efflux of the waste product lactate in the intraerythrocytic parasites; active in acidic-to-neutral pH range. Transports L-lactate. This is Formate-nitrite transporter from Plasmodium malariae.